Reading from the N-terminus, the 416-residue chain is Tyrosine--tRNA ligase (416 aa).

Position 39 (Y39) interacts with L-tyrosine. Residues 44 to 53 carry the 'HIGH' region motif; the sequence is CTASSLHVGS. L-tyrosine-binding residues include Y176 and Q180. Residues 236 to 240 carry the 'KMSKS' region motif; the sequence is KMGKT. ATP is bound at residue K239. An S4 RNA-binding domain is found at 349-415; it reads ISLIDLLHDI…GKKRHIKVMV (67 aa).

The protein belongs to the class-I aminoacyl-tRNA synthetase family. TyrS type 1 subfamily. As to quaternary structure, homodimer.

Its subcellular location is the cytoplasm. The enzyme catalyses tRNA(Tyr) + L-tyrosine + ATP = L-tyrosyl-tRNA(Tyr) + AMP + diphosphate + H(+). Functionally, catalyzes the attachment of tyrosine to tRNA(Tyr) in a two-step reaction: tyrosine is first activated by ATP to form Tyr-AMP and then transferred to the acceptor end of tRNA(Tyr). In Wolbachia sp. subsp. Brugia malayi (strain TRS), this protein is Tyrosine--tRNA ligase.